We begin with the raw amino-acid sequence, 494 residues long: Cysteine--tRNA ligase (494 aa).

A Zn(2+)-binding site is contributed by Cys-29. A 'HIGH' region motif is present at residues 31 to 41 (VTVYDYCHLGH). Cys-216, His-241, and Glu-245 together coordinate Zn(2+). The 'KMSKS' region motif lies at 273–277 (KMSKS). ATP is bound at residue Lys-276.

It belongs to the class-I aminoacyl-tRNA synthetase family. In terms of assembly, monomer. The cofactor is Zn(2+).

It localises to the cytoplasm. It carries out the reaction tRNA(Cys) + L-cysteine + ATP = L-cysteinyl-tRNA(Cys) + AMP + diphosphate. This chain is Cysteine--tRNA ligase, found in Cyanothece sp. (strain PCC 7425 / ATCC 29141).